We begin with the raw amino-acid sequence, 385 residues long: tRNA-specific 2-thiouridylase MnmA (385 aa).

Residues 8–15 (AMSGGVDS) and leucine 34 contribute to the ATP site. Cysteine 102 acts as the Nucleophile in catalysis. Residues cysteine 102 and cysteine 200 are joined by a disulfide bond. Residue glycine 126 participates in ATP binding. Residues 150–152 (KDQ) are interaction with tRNA. Catalysis depends on cysteine 200, which acts as the Cysteine persulfide intermediate. Positions 307 to 308 (RY) are interaction with tRNA.

Belongs to the MnmA/TRMU family.

Its subcellular location is the cytoplasm. It catalyses the reaction S-sulfanyl-L-cysteinyl-[protein] + uridine(34) in tRNA + AH2 + ATP = 2-thiouridine(34) in tRNA + L-cysteinyl-[protein] + A + AMP + diphosphate + H(+). Functionally, catalyzes the 2-thiolation of uridine at the wobble position (U34) of tRNA, leading to the formation of s(2)U34. This Heliobacterium modesticaldum (strain ATCC 51547 / Ice1) protein is tRNA-specific 2-thiouridylase MnmA.